Consider the following 347-residue polypeptide: Eukaryotic translation initiation factor 3 subunit I (347 aa).

6 WD repeats span residues 8–49, 50–89, 146–186, 198–237, 239–278, and 295–336; these read GHER…GTYE, GHNG…CLFT, TFSG…PESG, AHTD…VIKT, ATET…GRFE, and GHFG…SKLY.

Belongs to the eIF-3 subunit I family. As to quaternary structure, component of the eukaryotic translation initiation factor 3 (eIF-3) complex.

Its subcellular location is the cytoplasm. Functionally, component of the eukaryotic translation initiation factor 3 (eIF-3) complex, which is involved in protein synthesis of a specialized repertoire of mRNAs and, together with other initiation factors, stimulates binding of mRNA and methionyl-tRNAi to the 40S ribosome. The eIF-3 complex specifically targets and initiates translation of a subset of mRNAs involved in cell proliferation. In Mycosarcoma maydis (Corn smut fungus), this protein is Eukaryotic translation initiation factor 3 subunit I.